Reading from the N-terminus, the 161-residue chain is uncharacterized protein (161 aa).

The protein belongs to the sapovirus VP3 family.

This is an uncharacterized protein from Sapporo virus (isolate GI/Human/Germany/pJG-Sap01) (Hu/Dresden/pJG-Sap01/DE).